An 89-amino-acid chain; its full sequence is Small ribosomal subunit protein uS15 (89 aa).

The protein belongs to the universal ribosomal protein uS15 family. Part of the 30S ribosomal subunit. Forms a bridge to the 50S subunit in the 70S ribosome, contacting the 23S rRNA.

One of the primary rRNA binding proteins, it binds directly to 16S rRNA where it helps nucleate assembly of the platform of the 30S subunit by binding and bridging several RNA helices of the 16S rRNA. In terms of biological role, forms an intersubunit bridge (bridge B4) with the 23S rRNA of the 50S subunit in the ribosome. The chain is Small ribosomal subunit protein uS15 from Bacillus licheniformis (strain ATCC 14580 / DSM 13 / JCM 2505 / CCUG 7422 / NBRC 12200 / NCIMB 9375 / NCTC 10341 / NRRL NRS-1264 / Gibson 46).